The following is a 307-amino-acid chain: Chaperone protein DnaJ 2 (307 aa).

The 66-residue stretch at 6–71 (NYYQILGVPR…TKRRELDSRL (66 aa)) folds into the J domain. Residues 69 to 133 (SRLFGRFRRP…TRRTKVVSPA (65 aa)) are disordered. Residues 88–99 (NGGRSPNGTSVN) show a composition bias toward polar residues. Positions 100–114 (GQVRTPTGRTGTRQP) are enriched in low complexity.

Belongs to the DnaJ family. As to quaternary structure, homodimer. Zn(2+) is required as a cofactor.

The protein localises to the cytoplasm. Participates actively in the response to hyperosmotic and heat shock by preventing the aggregation of stress-denatured proteins and by disaggregating proteins, also in an autonomous, DnaK-independent fashion. Unfolded proteins bind initially to DnaJ; upon interaction with the DnaJ-bound protein, DnaK hydrolyzes its bound ATP, resulting in the formation of a stable complex. GrpE releases ADP from DnaK; ATP binding to DnaK triggers the release of the substrate protein, thus completing the reaction cycle. Several rounds of ATP-dependent interactions between DnaJ, DnaK and GrpE are required for fully efficient folding. Also involved, together with DnaK and GrpE, in the DNA replication of plasmids through activation of initiation proteins. The protein is Chaperone protein DnaJ 2 (dnaJ2) of Synechocystis sp. (strain ATCC 27184 / PCC 6803 / Kazusa).